The primary structure comprises 208 residues: Small ribosomal subunit protein uS4 (208 aa).

One can recognise an S4 RNA-binding domain in the interval glycine 98–lysine 158.

The protein belongs to the universal ribosomal protein uS4 family. As to quaternary structure, part of the 30S ribosomal subunit. Contacts protein S5. The interaction surface between S4 and S5 is involved in control of translational fidelity.

One of the primary rRNA binding proteins, it binds directly to 16S rRNA where it nucleates assembly of the body of the 30S subunit. In terms of biological role, with S5 and S12 plays an important role in translational accuracy. This chain is Small ribosomal subunit protein uS4, found in Haemophilus ducreyi (strain 35000HP / ATCC 700724).